A 512-amino-acid polypeptide reads, in one-letter code: 2-isopropylmalate synthase (512 aa).

Residues 5 to 268 enclose the Pyruvate carboxyltransferase domain; sequence LIIFDTTLRD…DVDIETQHIL (264 aa). Mn(2+)-binding residues include Asp14, His202, His204, and Asn239. Residues 394-512 form a regulatory domain region; the sequence is SFVSLSQHSE…SKADRVAAQG (119 aa).

It belongs to the alpha-IPM synthase/homocitrate synthase family. LeuA type 1 subfamily. In terms of assembly, homodimer. Requires Mn(2+) as cofactor.

The protein resides in the cytoplasm. It catalyses the reaction 3-methyl-2-oxobutanoate + acetyl-CoA + H2O = (2S)-2-isopropylmalate + CoA + H(+). It participates in amino-acid biosynthesis; L-leucine biosynthesis; L-leucine from 3-methyl-2-oxobutanoate: step 1/4. In terms of biological role, catalyzes the condensation of the acetyl group of acetyl-CoA with 3-methyl-2-oxobutanoate (2-ketoisovalerate) to form 3-carboxy-3-hydroxy-4-methylpentanoate (2-isopropylmalate). The protein is 2-isopropylmalate synthase of Albidiferax ferrireducens (strain ATCC BAA-621 / DSM 15236 / T118) (Rhodoferax ferrireducens).